Consider the following 422-residue polypeptide: Glutamyl-tRNA reductase (422 aa).

Substrate-binding positions include 49–52 (TCNR), Ser107, 112–114 (EPQ), and Gln118. Cys50 (nucleophile) is an active-site residue. NADP(+) is bound at residue 187–192 (GAGETI).

It belongs to the glutamyl-tRNA reductase family. As to quaternary structure, homodimer.

It catalyses the reaction (S)-4-amino-5-oxopentanoate + tRNA(Glu) + NADP(+) = L-glutamyl-tRNA(Glu) + NADPH + H(+). The protein operates within porphyrin-containing compound metabolism; protoporphyrin-IX biosynthesis; 5-aminolevulinate from L-glutamyl-tRNA(Glu): step 1/2. Functionally, catalyzes the NADPH-dependent reduction of glutamyl-tRNA(Glu) to glutamate 1-semialdehyde (GSA). The sequence is that of Glutamyl-tRNA reductase from Pseudomonas paraeruginosa (strain DSM 24068 / PA7) (Pseudomonas aeruginosa (strain PA7)).